Consider the following 438-residue polypeptide: Cytochrome P450 monooxygenase claJ (438 aa).

Residue cysteine 378 participates in heme binding.

Belongs to the cytochrome P450 family. The cofactor is heme.

It participates in secondary metabolite biosynthesis. Cytochrome P450 monooxygenase; part of the cla gene cluster that produces clavatol and ortho-quinone methide. The clavatol biosynthesis cluster cla and the terrestric acid cluster tra are both involved in the production of peniphenones and penilactones. The non-reducing PKS claF is responsible for the formation of clavatol from successive condensations of 3 malonyl-CoA units, presumably with a simple acetyl-CoA starter unit, and 2 methylation steps. The esterase claE probably collaborates with claF by catalyzing the hydrolysis of ACP-bound acyl intermediates to free the ACP from stalled intermediates. The clavatol oxidase claD then converts clavatol to hydroxyclavatol. Spontaneous dehydration of hydroxyclavatol leads to the accumulation of the highly active ortho-quinone methide. On the other hand, the PKS-NRPS hybrid traA is involved in the formation of crustosic acid, with the help of traB and traD. The polyketide synthase module (PKS) of traA is responsible for the synthesis of the polyketide backbone via the condensation of an acetyl-CoA starter unit with 3 malonyl-CoA units. The downstream nonribosomal peptide synthetase (NRPS) module then amidates the carboxyl end of the polyketide with L-malic acid. Because traA lacks a designated enoylreductase (ER) domain, the required activity is provided the enoyl reductase traG. Crustosic acid undergoes decarboxylation and isomerization to the terrestric acid, catalyzed by the 2-oxoglutarate-dependent dioxygenase traH. Both acids are further converted to the 2 gamma-butyrolactones (R)-5-methyltetronic acid and (S)-5-carboxylmethyltetronic acid, with involvement of the cytochrome P450 monooxygenase claJ. Spontaneous addition of the methide to these gamma-butyrolactones leads to peniphenone D and penilactone D, which undergo again stereospecific attacking by methide to give penilactones A and B. This Penicillium crustosum (Blue mold fungus) protein is Cytochrome P450 monooxygenase claJ.